A 119-amino-acid chain; its full sequence is NADH-quinone oxidoreductase subunit A (119 aa).

Transmembrane regions (helical) follow at residues 7-27 (FPVLLFILVGIGVGLVPMFLG), 63-83 (LIAILFILFDLETAFLFPWGV), and 88-108 (IGWLGYASMVIFLLEFIVGFV).

This sequence belongs to the complex I subunit 3 family. As to quaternary structure, NDH-1 is composed of 14 different subunits. Subunits NuoA, H, J, K, L, M, N constitute the membrane sector of the complex.

The protein localises to the cell inner membrane. The enzyme catalyses a quinone + NADH + 5 H(+)(in) = a quinol + NAD(+) + 4 H(+)(out). NDH-1 shuttles electrons from NADH, via FMN and iron-sulfur (Fe-S) centers, to quinones in the respiratory chain. The immediate electron acceptor for the enzyme in this species is believed to be ubiquinone. Couples the redox reaction to proton translocation (for every two electrons transferred, four hydrogen ions are translocated across the cytoplasmic membrane), and thus conserves the redox energy in a proton gradient. The protein is NADH-quinone oxidoreductase subunit A of Polynucleobacter necessarius subsp. necessarius (strain STIR1).